The sequence spans 204 residues: Probable 5-formyltetrahydrofolate cyclo-ligase (204 aa).

Position 5 to 9 (Lys5 to Arg9) interacts with ATP. Residues Glu57, Trp102, and His140–Tyr144 contribute to the substrate site. Residues Gly139–Asp146 and Asp188 each bind ATP.

The protein belongs to the 5-formyltetrahydrofolate cyclo-ligase family.

The catalysed reaction is (6S)-5-formyl-5,6,7,8-tetrahydrofolate + ATP = (6R)-5,10-methenyltetrahydrofolate + ADP + phosphate. The sequence is that of Probable 5-formyltetrahydrofolate cyclo-ligase from Schizosaccharomyces pombe (strain 972 / ATCC 24843) (Fission yeast).